Consider the following 1216-residue polypeptide: Sodium/potassium/calcium exchanger 1 (1216 aa).

At 1–446 (MGKLIRMGAQ…DLFSVEERRQ (446 aa)) the chain is on the extracellular side. Residues 94–196 (EATAGRDGTP…KYSPSPLGRM (103 aa)) are disordered. Polar residues-rich tracts occupy residues 110-135 (NTPS…TPTG) and 144-166 (SATP…SYTR). 2 N-linked (GlcNAc...) asparagine glycosylation sites follow: Asn-290 and Asn-303. A helical transmembrane segment spans residues 447 to 467 (GWVVLHIFGMMYVFVALAIVC). Topologically, residues 468–491 (DEYFVPALGVITDKLQISEDVAGA) are cytoplasmic. One copy of the Alpha-1 repeat lies at 488–528 (VAGATFMAAGGSAPELFTSLIGVFISHSNVGIGTIVGSAVF). A helical transmembrane segment spans residues 492–512 (TFMAAGGSAPELFTSLIGVFI). The Extracellular portion of the chain corresponds to 513-518 (SHSNVG). A helical transmembrane segment spans residues 519 to 539 (IGTIVGSAVFNILFVIGTCAL). The Cytoplasmic segment spans residues 540-557 (FSREILNLTWWPLFRDIT). A helical membrane pass occupies residues 558–578 (FYIFDLMMLILFFLDSLIAWW). Glu-579 is a topological domain (extracellular). The helical transmembrane segment at 580–600 (SVLLLLAYAFYVFTMKWNQQL) threads the bilayer. The Cytoplasmic portion of the chain corresponds to 601–1024 (ELWVKEQLNK…SLEWPETRRK (424 aa)). Residue Ser-652 is modified to Phosphoserine. The disordered stretch occupies residues 677–1018 (GEARPSKDKE…ENEQPLSLEW (342 aa)). The span at 702-712 (AESKPEEEPAK) shows a compositional bias: basic and acidic residues. Thr-717 carries the phosphothreonine modification. The stretch at 796-811 (DEDEGEIQAEGGEVKG) is one 1; approximate repeat. An 8 X 17 AA tandem repeats of D-E-D-E-G-E-I-Q-A-G-E-[GA]-G-E-V-[EK]-G region spans residues 796–928 (DEDEGEIQAE…QAGEAGEVEG (133 aa)). 6 consecutive repeat copies span residues 812–828 (DEDE…EVEG), 829–845 (DEDE…EVEG), 846–862 (DEDE…EVEG), 863–879 (DEDE…EVEG), 880–896 (DEDE…EVEG), and 897–913 (DEDE…EVKG). Composition is skewed to acidic residues over residues 824–834 (GEVEGDEDEGE), 841–851 (GEVEGDEDEGE), 858–868 (GEVEGDEDEGE), 875–885 (GEVEGDEDEGE), 892–902 (GEVEGDEDEGE), 924–941 (GEVE…DEGE), and 981–1011 (GDSE…EENE). The stretch at 914–928 (DEGEIQAGEAGEVEG) is one 8; approximate repeat. A helical transmembrane segment spans residues 1025 to 1045 (QAIYLFLLPIVFPLWLTVPDV). Over 1046-1052 (RRLEAKK) the chain is Extracellular. Residues 1053–1073 (FFVITFLGSILWIAMFSYLMV) traverse the membrane as a helical segment. Residues 1074-1088 (WWAHQVGETIGISEE) lie on the Cytoplasmic side of the membrane. Residues 1089 to 1109 (IMGLTILAAGTSIPDLITSVI) traverse the membrane as a helical segment. The stretch at 1096–1127 (AAGTSIPDLITSVIVARKGLGDMAVSSSVGSN) is one Alpha-2 repeat. At 1110 to 1127 (VARKGLGDMAVSSSVGSN) the chain is on the extracellular side. A helical transmembrane segment spans residues 1128 to 1148 (IFDITVGLPLPWMLFSLINGL). Over 1149–1157 (QPVAVSSNG) the chain is Cytoplasmic. The chain crosses the membrane as a helical span at residues 1158 to 1178 (LFCAIVLLFLMLLFVISSIAL). Residues 1179 to 1185 (CKWRMNK) lie on the Extracellular side of the membrane. A helical transmembrane segment spans residues 1186-1206 (ILGFTMFLLYFVFLIISVMLE). Residues 1207 to 1216 (DRIISCPVSV) are Cytoplasmic-facing.

This sequence belongs to the Ca(2+):cation antiporter (CaCA) (TC 2.A.19) family. SLC24A subfamily. The uncleaved signal sequence is required for efficient membrane targeting and proper membrane integration and topology. Post-translationally, glycosylated. As to expression, retina.

The protein localises to the cell membrane. The enzyme catalyses Ca(2+)(out) + K(+)(out) + 4 Na(+)(in) = Ca(2+)(in) + K(+)(in) + 4 Na(+)(out). Its function is as follows. Calcium, potassium:sodium antiporter that transports 1 Ca(2+) and 1 K(+) in exchange for 4 Na(+). Critical component of the visual transduction cascade, controlling the calcium concentration of outer segments during light and darkness. Light causes a rapid lowering of cytosolic free calcium in the outer segment of both retinal rod and cone photoreceptors and the light-induced lowering of calcium is caused by extrusion via this protein which plays a key role in the process of light adaptation. The polypeptide is Sodium/potassium/calcium exchanger 1 (SLC24A1) (Bos taurus (Bovine)).